Consider the following 319-residue polypeptide: Cobalamin biosynthesis protein CbiB (319 aa).

4 helical membrane-spanning segments follow: residues valine 56 to alanine 76, tryptophan 82 to alanine 102, valine 153 to alanine 173, and leucine 296 to serine 316.

It belongs to the CobD/CbiB family.

It localises to the cell membrane. It participates in cofactor biosynthesis; adenosylcobalamin biosynthesis. Its function is as follows. Converts cobyric acid to cobinamide by the addition of aminopropanol on the F carboxylic group. However, the true cosubstrate could be (R)-1-amino-2-propanol O-2-phosphate, leading to cobinamide phosphate. This chain is Cobalamin biosynthesis protein CbiB, found in Salmonella paratyphi A (strain ATCC 9150 / SARB42).